The chain runs to 117 residues: Immunoglobulin kappa variable 1D-12 (117 aa).

Residues 1–22 (MDMMVPAQLLGLLLLWFPGSRC) form the signal peptide. Residues 23–45 (DIQMTQSPSSVSASVGDRVTITC) are framework-1. An Ig-like domain is found at 24–117 (IQMTQSPSSV…YYCQQANSFP (94 aa)). A disulfide bond links C45 and C110. The tract at residues 46–56 (RASQGISSWLA) is complementarity-determining-1. The interval 57–71 (WYQQKPGKAPKLLIY) is framework-2. The interval 72–78 (AASSLQS) is complementarity-determining-2. The tract at residues 79–110 (GVPSRFSGSGSGTDFTLTISSLQPEDFATYYC) is framework-3. Positions 111–117 (QQANSFP) are complementarity-determining-3.

Immunoglobulins are composed of two identical heavy chains and two identical light chains; disulfide-linked.

Its subcellular location is the secreted. It localises to the cell membrane. Functionally, v region of the variable domain of immunoglobulin light chains that participates in the antigen recognition. Immunoglobulins, also known as antibodies, are membrane-bound or secreted glycoproteins produced by B lymphocytes. In the recognition phase of humoral immunity, the membrane-bound immunoglobulins serve as receptors which, upon binding of a specific antigen, trigger the clonal expansion and differentiation of B lymphocytes into immunoglobulins-secreting plasma cells. Secreted immunoglobulins mediate the effector phase of humoral immunity, which results in the elimination of bound antigens. The antigen binding site is formed by the variable domain of one heavy chain, together with that of its associated light chain. Thus, each immunoglobulin has two antigen binding sites with remarkable affinity for a particular antigen. The variable domains are assembled by a process called V-(D)-J rearrangement and can then be subjected to somatic hypermutations which, after exposure to antigen and selection, allow affinity maturation for a particular antigen. This is Immunoglobulin kappa variable 1D-12 from Homo sapiens (Human).